The following is a 636-amino-acid chain: MSKVIGIDLGTTNSCVAVMEGGEPVVIANAEGSRTTPSMVAFAESGERLVGQQAKRQAVTNPENTLFAIKRLIGRKYDTEEVRKDISISPFKIVKADNGDAWVEARGKMYSAPEISAMVLQKMKQTAEDYLGETVTDAVITVPAYFNDSQRQATKDAGKIAGLNVLRIINEPTAAALAYGLDKKKDEKIAVFDLGGGTFDISILELGDGVFEVKSTNGDTFLGGEDFDQRVIDWIADEFKKDQGIDLRGDKMALQRLKEAAEKAKCELSTSMETDINLPFITADATGPKHLTMKLSRAKLEALCADLLNKLEGPCRTALKDAGLSPSEVDEVILVGGMTRMPAVQKRVQEIFGKVPNKGVNPDEVVAIGAAIQGGVLRGDVKDVLLLDVTPLSLGIETLGSVMTKLIEKNTTIPCRKSQVFSTASDNQPAVTIHVLQGEREMAIDNKTLGNFELTGIPPAPRGVPQIEVTFDIDANGIVHVSAKDLGTGKEQSIRITASSGLSKEEIDKMVKEAEAHSAEDKKKRELVEARNHADTLSYSTEKSLKEYGDKIGADEKAKIEECLANLRKAMEGSDVEVLKKATDELTQASHKLAEAVYAKAQAEGAQPGGEAAGEASAKDEKVVDADFEEVKDDKK.

At T198 the chain carries Phosphothreonine; by autocatalysis. Residues 602 to 636 are disordered; sequence QAEGAQPGGEAAGEASAKDEKVVDADFEEVKDDKK. Residues 626–636 are compositionally biased toward acidic residues; sequence ADFEEVKDDKK.

The protein belongs to the heat shock protein 70 family.

Functionally, acts as a chaperone. The polypeptide is Chaperone protein DnaK (Geobacter sulfurreducens (strain ATCC 51573 / DSM 12127 / PCA)).